The following is a 229-amino-acid chain: Isopentenyl-diphosphate delta-isomerase (229 aa).

K39 provides a ligand contact to substrate. Positions 43 and 54 each coordinate Mg(2+). The Nudix hydrolase domain maps to 52 to 202 (LLHRAFSMFI…QYGFTPWFKL (151 aa)). Substrate contacts are provided by Q72 and K77. The active site involves C89. S90 lines the substrate pocket. Residues E152 and E154 each contribute to the Mg(2+) site. E154 is a catalytic residue.

The protein belongs to the IPP isomerase type 1 family. Mg(2+) is required as a cofactor.

It localises to the cytoplasm. The protein localises to the nucleus. The catalysed reaction is isopentenyl diphosphate = dimethylallyl diphosphate. Its pathway is isoprenoid biosynthesis; dimethylallyl diphosphate biosynthesis; dimethylallyl diphosphate from isopentenyl diphosphate: step 1/1. In terms of biological role, isopentenyl-diphosphate delta-isomerase; part of the second module of ergosterol biosynthesis pathway that includes the middle steps of the pathway. Idi1 catalyzes the 1,3-allylic rearrangement of isopentenyl (IPP) to its highly electrophilic allylic isomer, dimethylallyl diphosphate (DMAPP). The second module is carried out in the vacuole and involves the formation of farnesyl diphosphate, which is also an important intermediate in the biosynthesis of ubiquinone, dolichol, heme and prenylated proteins. Activity by the mevalonate kinase erg12 first converts mevalonate into 5-phosphomevalonate. 5-phosphomevalonate is then further converted to 5-diphosphomevalonate by the phosphomevalonate kinase erg8. The diphosphomevalonate decarboxylase mvd1 then produces isopentenyl diphosphate. The isopentenyl-diphosphate delta-isomerase idi1 then catalyzes the 1,3-allylic rearrangement of the homoallylic substrate isopentenyl (IPP) to its highly electrophilic allylic isomer, dimethylallyl diphosphate (DMAPP). Finally the farnesyl diphosphate synthase fps1 catalyzes the sequential condensation of isopentenyl pyrophosphate with dimethylallyl pyrophosphate, and then with the resultant geranylpyrophosphate to the ultimate product farnesyl pyrophosphate. The protein is Isopentenyl-diphosphate delta-isomerase of Schizosaccharomyces pombe (strain 972 / ATCC 24843) (Fission yeast).